The sequence spans 131 residues: Small ribosomal subunit protein uS8 (131 aa).

Belongs to the universal ribosomal protein uS8 family. Part of the 30S ribosomal subunit. Contacts proteins S5 and S12.

One of the primary rRNA binding proteins, it binds directly to 16S rRNA central domain where it helps coordinate assembly of the platform of the 30S subunit. The protein is Small ribosomal subunit protein uS8 of Zymomonas mobilis subsp. mobilis (strain ATCC 31821 / ZM4 / CP4).